A 100-amino-acid chain; its full sequence is Urease subunit gamma (100 aa).

It belongs to the urease gamma subunit family. Heterotrimer of UreA (gamma), UreB (beta) and UreC (alpha) subunits. Three heterotrimers associate to form the active enzyme.

The protein localises to the cytoplasm. The catalysed reaction is urea + 2 H2O + H(+) = hydrogencarbonate + 2 NH4(+). The protein operates within nitrogen metabolism; urea degradation; CO(2) and NH(3) from urea (urease route): step 1/1. This chain is Urease subunit gamma, found in Rhodopseudomonas palustris (strain BisB5).